The sequence spans 168 residues: NADH-quinone oxidoreductase subunit I (168 aa).

4Fe-4S ferredoxin-type domains lie at 58–88 and 99–128; these read LRRY…IEAG and VRYD…EGPN. Residues cysteine 68, cysteine 71, cysteine 74, cysteine 78, cysteine 108, cysteine 111, cysteine 114, and cysteine 118 each coordinate [4Fe-4S] cluster.

It belongs to the complex I 23 kDa subunit family. NDH-1 is composed of 14 different subunits. Subunits NuoA, H, J, K, L, M, N constitute the membrane sector of the complex. The cofactor is [4Fe-4S] cluster.

It localises to the cell inner membrane. It catalyses the reaction a quinone + NADH + 5 H(+)(in) = a quinol + NAD(+) + 4 H(+)(out). Functionally, NDH-1 shuttles electrons from NADH, via FMN and iron-sulfur (Fe-S) centers, to quinones in the respiratory chain. The immediate electron acceptor for the enzyme in this species is believed to be ubiquinone. Couples the redox reaction to proton translocation (for every two electrons transferred, four hydrogen ions are translocated across the cytoplasmic membrane), and thus conserves the redox energy in a proton gradient. This is NADH-quinone oxidoreductase subunit I from Bradyrhizobium diazoefficiens (strain JCM 10833 / BCRC 13528 / IAM 13628 / NBRC 14792 / USDA 110).